The sequence spans 419 residues: Dynein regulatory complex protein 9 (419 aa).

Disordered stretches follow at residues 1–47 (MEGE…SPEV) and 393–419 (SFKM…RGKK). Acidic residues predominate over residues 34–44 (EELEEEEEETS). Residues 371 to 400 (ELRSIVKLQAWWRGTVVRREIGSFKMPKKE) form the IQ domain.

This sequence belongs to the DRC9 family. In terms of assembly, component of the nexin-dynein regulatory complex (N-DRC). Interacts (via IQ domain) with CALM when calcium levels are low. Does not interact with CALM in the presence of Ca(2+). Interacts with the HSP70 proteins HSPA1L and HSPA8. May form a complex with CAMK4 and HSP70.

The protein localises to the cytoplasm. Its subcellular location is the cell projection. It is found in the cilium. The protein resides in the flagellum. It localises to the cytoskeleton. The protein localises to the flagellum axoneme. Functionally, component of the nexin-dynein regulatory complex (N-DRC), a key regulator of ciliary/flagellar motility which maintains the alignment and integrity of the distal axoneme and regulates microtubule sliding in motile axonemes. Binds calmodulin when cellular Ca(2+) levels are low and thereby contributes to the regulation of calcium and calmodulin-dependent protein kinase IV (CAMK4) activity; contributes to the regulation of CAMK4 signaling cascades. Required for normal axoneme assembly in sperm flagella, normal sperm tail formation and for male fertility. This chain is Dynein regulatory complex protein 9 (Iqcg), found in Rattus norvegicus (Rat).